The chain runs to 302 residues: Short-chain dehydrogenase/reductase 3 (302 aa).

4 helical membrane passes run 9 to 29 (LVMFPLQMIYLVVKAAVGLVL), 170 to 190 (IVCLNSVLALSAIPGAIDYCT), 195 to 215 (AFAFMESLTLGLLDCPGVSAT), and 253 to 273 (AVQLNQALLLLPWTMHALVIL). Serine 175 contacts substrate. Tyrosine 188 acts as the Proton acceptor in catalysis.

The protein belongs to the short-chain dehydrogenases/reductases (SDR) family. In terms of tissue distribution, widely expressed with highest levels found in heart, placenta, lung, liver, kidney, pancreas, thyroid, testis, stomach, trachea and spinal cord. Lower levels found in skeletal muscle, intestine and lymph node. No expression detected in brain. In the retina, expressed in cone but not rod outer segments.

Its subcellular location is the membrane. It carries out the reaction all-trans-retinol + NADP(+) = all-trans-retinal + NADPH + H(+). In terms of biological role, catalyzes the reduction of all-trans-retinal to all-trans-retinol in the presence of NADPH. This Homo sapiens (Human) protein is Short-chain dehydrogenase/reductase 3 (DHRS3).